The sequence spans 369 residues: Ferredoxin--NADP reductase 2 (369 aa).

The segment at 1–21 is disordered; it reads MDLSIPNPVADATRQVEGGSP. FAD-binding residues include D58, Q66, Y71, V111, F146, D311, and T352.

The protein belongs to the ferredoxin--NADP reductase type 2 family. As to quaternary structure, homodimer. FAD is required as a cofactor.

The enzyme catalyses 2 reduced [2Fe-2S]-[ferredoxin] + NADP(+) + H(+) = 2 oxidized [2Fe-2S]-[ferredoxin] + NADPH. This Cupriavidus taiwanensis (strain DSM 17343 / BCRC 17206 / CCUG 44338 / CIP 107171 / LMG 19424 / R1) (Ralstonia taiwanensis (strain LMG 19424)) protein is Ferredoxin--NADP reductase 2.